Here is a 1058-residue protein sequence, read N- to C-terminus: Carbamoyl phosphate synthase large chain (1058 aa).

The interval 1–401 (MPKRKDIQKI…SLLKACRSLE (401 aa)) is carboxyphosphate synthetic domain. The ATP site is built by Arg129, Arg169, Gly175, Gly176, Arg208, Ile210, Glu215, Gly241, Ile242, His243, Gln284, and Glu298. Residues 133-327 (KQLMQELDQP…IAKLAAKIAV (195 aa)) enclose the ATP-grasp 1 domain. Mg(2+) contacts are provided by Gln284, Glu298, and Asn300. Residues Gln284, Glu298, and Asn300 each coordinate Mn(2+). The tract at residues 402-546 (IGVCHNEMTS…YSTYELENES (145 aa)) is oligomerization domain. The interval 547–929 (VQSNKESILV…ALYKAFEANN (383 aa)) is carbamoyl phosphate synthetic domain. The ATP-grasp 2 domain occupies 671-861 (EKALKELGIP…MAQIATKLIL (191 aa)). Arg707, Ser746, Ile748, Glu752, Gly777, Val778, His779, Ser780, Gln820, and Glu832 together coordinate ATP. 3 residues coordinate Mg(2+): Gln820, Glu832, and Asn834. Residues Gln820, Glu832, and Asn834 each coordinate Mn(2+). The 129-residue stretch at 930-1058 (SHLSEFGQIV…ESRCFNIEAI (129 aa)) folds into the MGS-like domain. The tract at residues 930-1058 (SHLSEFGQIV…ESRCFNIEAI (129 aa)) is allosteric domain.

Belongs to the CarB family. Composed of two chains; the small (or glutamine) chain promotes the hydrolysis of glutamine to ammonia, which is used by the large (or ammonia) chain to synthesize carbamoyl phosphate. Tetramer of heterodimers (alpha,beta)4. Mg(2+) is required as a cofactor. The cofactor is Mn(2+).

It carries out the reaction hydrogencarbonate + L-glutamine + 2 ATP + H2O = carbamoyl phosphate + L-glutamate + 2 ADP + phosphate + 2 H(+). It catalyses the reaction hydrogencarbonate + NH4(+) + 2 ATP = carbamoyl phosphate + 2 ADP + phosphate + 2 H(+). It functions in the pathway amino-acid biosynthesis; L-arginine biosynthesis; carbamoyl phosphate from bicarbonate: step 1/1. The protein operates within pyrimidine metabolism; UMP biosynthesis via de novo pathway; (S)-dihydroorotate from bicarbonate: step 1/3. Its function is as follows. Large subunit of the glutamine-dependent carbamoyl phosphate synthetase (CPSase). CPSase catalyzes the formation of carbamoyl phosphate from the ammonia moiety of glutamine, carbonate, and phosphate donated by ATP, constituting the first step of 2 biosynthetic pathways, one leading to arginine and/or urea and the other to pyrimidine nucleotides. The large subunit (synthetase) binds the substrates ammonia (free or transferred from glutamine from the small subunit), hydrogencarbonate and ATP and carries out an ATP-coupled ligase reaction, activating hydrogencarbonate by forming carboxy phosphate which reacts with ammonia to form carbamoyl phosphate. This Streptococcus pyogenes serotype M3 (strain SSI-1) protein is Carbamoyl phosphate synthase large chain.